The chain runs to 96 residues: Small ribosomal subunit protein bS6 (96 aa).

The protein belongs to the bacterial ribosomal protein bS6 family.

In terms of biological role, binds together with bS18 to 16S ribosomal RNA. The protein is Small ribosomal subunit protein bS6 of Salinispora arenicola (strain CNS-205).